A 635-amino-acid chain; its full sequence is 1-deoxy-D-xylulose-5-phosphate synthase (635 aa).

Thiamine diphosphate is bound by residues H73 and 114–116 (SHA). D146 provides a ligand contact to Mg(2+). Thiamine diphosphate-binding positions include 147–148 (GA), N176, Y287, and E368. N176 contributes to the Mg(2+) binding site.

Belongs to the transketolase family. DXPS subfamily. Homodimer. It depends on Mg(2+) as a cofactor. The cofactor is thiamine diphosphate.

The catalysed reaction is D-glyceraldehyde 3-phosphate + pyruvate + H(+) = 1-deoxy-D-xylulose 5-phosphate + CO2. It participates in metabolic intermediate biosynthesis; 1-deoxy-D-xylulose 5-phosphate biosynthesis; 1-deoxy-D-xylulose 5-phosphate from D-glyceraldehyde 3-phosphate and pyruvate: step 1/1. Catalyzes the acyloin condensation reaction between C atoms 2 and 3 of pyruvate and glyceraldehyde 3-phosphate to yield 1-deoxy-D-xylulose-5-phosphate (DXP). The polypeptide is 1-deoxy-D-xylulose-5-phosphate synthase (Corynebacterium diphtheriae (strain ATCC 700971 / NCTC 13129 / Biotype gravis)).